Consider the following 97-residue polypeptide: Protein MxiI (97 aa).

To S.typhimurium PrgJ.

Necessary for the secretion of IPA invasins. This chain is Protein MxiI (mxiI), found in Shigella flexneri.